The following is a 232-amino-acid chain: Orotidine 5'-phosphate decarboxylase (232 aa).

Residues aspartate 11, lysine 33, 60–69 (DLKFHDIPHT), threonine 119, arginine 180, glutamine 189, glycine 209, and arginine 210 each bind substrate. Lysine 62 (proton donor) is an active-site residue.

It belongs to the OMP decarboxylase family. Type 1 subfamily. In terms of assembly, homodimer.

It carries out the reaction orotidine 5'-phosphate + H(+) = UMP + CO2. The protein operates within pyrimidine metabolism; UMP biosynthesis via de novo pathway; UMP from orotate: step 2/2. Its function is as follows. Catalyzes the decarboxylation of orotidine 5'-monophosphate (OMP) to uridine 5'-monophosphate (UMP). The polypeptide is Orotidine 5'-phosphate decarboxylase (Nitrosococcus oceani (strain ATCC 19707 / BCRC 17464 / JCM 30415 / NCIMB 11848 / C-107)).